A 137-amino-acid chain; its full sequence is Large ribosomal subunit protein mL61 (137 aa).

This sequence belongs to the mitochondrion-specific ribosomal protein mL61 family. In terms of assembly, component of the mitochondrial large ribosomal subunit (mt-LSU). Mature yeast 74S mitochondrial ribosomes consist of a small (37S) and a large (54S) subunit. The 37S small subunit contains a 15S ribosomal RNA (15S mt-rRNA) and 34 different proteins. The 54S large subunit contains a 21S rRNA (21S mt-rRNA) and 46 different proteins.

It is found in the mitochondrion. Functionally, component of the mitochondrial ribosome (mitoribosome), a dedicated translation machinery responsible for the synthesis of mitochondrial genome-encoded proteins, including at least some of the essential transmembrane subunits of the mitochondrial respiratory chain. The mitoribosomes are attached to the mitochondrial inner membrane and translation products are cotranslationally integrated into the membrane. mL61 is not essential in cells grown at 30 degrees Celsius but is required for mitochondrial translation in cells grown at 18 degrees Celsius. The protein is Large ribosomal subunit protein mL61 (MRP49) of Saccharomyces cerevisiae (strain ATCC 204508 / S288c) (Baker's yeast).